Consider the following 276-residue polypeptide: MNPYNLSYDELEKKAKAIRRKIVVLNANSPAGGHTGADLSQVEILTSLYFRVLNNDPKDLINPERDIYIQSKGHGAGGYYCCLAEAGYIPEDWLPTYQHSDSKLPGHPVKHKTPGVELNTGALGHGLPVAVGLAIAAKKSGSKRKIYVLTGDGELGEGSNWEAALTAAQYKLDNLIIINDKNKLQLAGFTKDILCTDPLDKKWEAFGMEVHECQGNDIRSVVDTLESIQPNGKPHVVIANTTKGAGISFIEGRPEWHHKVPKGDEVELALEELKDE.

It belongs to the transketolase family. As to quaternary structure, probable heterodimer composed of AptA and AptB. Thiamine diphosphate is required as a cofactor.

The enzyme catalyses apulose 4-phosphate + D-glyceraldehyde 3-phosphate = D-xylulose 5-phosphate + dihydroxyacetone phosphate. It functions in the pathway carbohydrate metabolism. Functionally, involved in catabolism of D-apiose. Catalyzes the transfer of the glycolaldehyde group from apulose-4-phosphate to D-glyceraldehyde 3-phosphate, generating dihydroxyacetone phosphate and D-xylulose-5-phosphate. The sequence is that of Apulose-4-phosphate transketolase subunit A from Actinobacillus succinogenes (strain ATCC 55618 / DSM 22257 / CCUG 43843 / 130Z).